A 294-amino-acid chain; its full sequence is Protein C3orf33 homolog (294 aa).

A2 is subject to N-acetylalanine. The helical transmembrane segment at 36-53 threads the bilayer; it reads LVQNISTGMAIAGIMLLI. The interval 244–271 is disordered; it reads KPAGADLGSTKDSYHDSRRRASGKGKDS.

Its subcellular location is the membrane. Its function is as follows. May play a role in transcription regulation. The polypeptide is Protein C3orf33 homolog (Mus musculus (Mouse)).